Reading from the N-terminus, the 250-residue chain is Cell division protein ZapD (250 aa).

Belongs to the ZapD family. In terms of assembly, interacts with FtsZ.

It localises to the cytoplasm. Functionally, cell division factor that enhances FtsZ-ring assembly. Directly interacts with FtsZ and promotes bundling of FtsZ protofilaments, with a reduction in FtsZ GTPase activity. The sequence is that of Cell division protein ZapD from Photorhabdus laumondii subsp. laumondii (strain DSM 15139 / CIP 105565 / TT01) (Photorhabdus luminescens subsp. laumondii).